A 368-amino-acid polypeptide reads, in one-letter code: p21-activated protein kinase-interacting protein 1-like (368 aa).

WD repeat units follow at residues 45-82 (AHTA…EHGA), 85-123 (HHDG…CLKT), 126-165 (AHKG…SAFI), 207-245 (AFTK…CVCE), and 248-289 (AHEN…IESP).

It is found in the nucleus. Its subcellular location is the nucleolus. In terms of biological role, negatively regulates the PAK1 kinase. PAK1 is a member of the PAK kinase family, which has been shown to play a positive role in the regulation of signaling pathways involving MAPK8 and RELA. PAK1 exists as an inactive homodimer, which is activated by binding of small GTPases such as CDC42 to an N-terminal regulatory domain. PAK1IP1 also binds to the N-terminus of PAK1, and inhibits the specific activation of PAK1 by CDC42. May be involved in ribosomal large subunit assembly. This is p21-activated protein kinase-interacting protein 1-like (pak1ip1) from Danio rerio (Zebrafish).